A 638-amino-acid chain; its full sequence is 1-deoxy-D-xylulose-5-phosphate synthase (638 aa).

Thiamine diphosphate-binding positions include histidine 78 and 119–121 (AHS). Mg(2+) is bound at residue aspartate 150. Thiamine diphosphate contacts are provided by residues 151-152 (GS), asparagine 179, tyrosine 288, and glutamate 370. Residue asparagine 179 coordinates Mg(2+).

The protein belongs to the transketolase family. DXPS subfamily. As to quaternary structure, homodimer. Requires Mg(2+) as cofactor. It depends on thiamine diphosphate as a cofactor.

It catalyses the reaction D-glyceraldehyde 3-phosphate + pyruvate + H(+) = 1-deoxy-D-xylulose 5-phosphate + CO2. The protein operates within metabolic intermediate biosynthesis; 1-deoxy-D-xylulose 5-phosphate biosynthesis; 1-deoxy-D-xylulose 5-phosphate from D-glyceraldehyde 3-phosphate and pyruvate: step 1/1. Functionally, catalyzes the acyloin condensation reaction between C atoms 2 and 3 of pyruvate and glyceraldehyde 3-phosphate to yield 1-deoxy-D-xylulose-5-phosphate (DXP). The polypeptide is 1-deoxy-D-xylulose-5-phosphate synthase (Brucella anthropi (strain ATCC 49188 / DSM 6882 / CCUG 24695 / JCM 21032 / LMG 3331 / NBRC 15819 / NCTC 12168 / Alc 37) (Ochrobactrum anthropi)).